We begin with the raw amino-acid sequence, 168 residues long: Small ribosomal subunit protein uS5 (168 aa).

Positions Leu13–Val76 constitute an S5 DRBM domain.

This sequence belongs to the universal ribosomal protein uS5 family. As to quaternary structure, part of the 30S ribosomal subunit. Contacts proteins S4 and S8.

Its function is as follows. With S4 and S12 plays an important role in translational accuracy. In terms of biological role, located at the back of the 30S subunit body where it stabilizes the conformation of the head with respect to the body. This chain is Small ribosomal subunit protein uS5, found in Shewanella amazonensis (strain ATCC BAA-1098 / SB2B).